Here is a 510-residue protein sequence, read N- to C-terminus: Global transcription regulator sge1 (510 aa).

3 disordered regions span residues 94-152 (PPGE…ASRN), 393-438 (HPFM…QQHS), and 469-510 (LGGT…MGRL). Residues 123–143 (NTGMNGTATGANAANLSSAGS) are compositionally biased toward low complexity. Composition is skewed to polar residues over residues 471 to 480 (GTNTDQSQPF) and 501 to 510 (PGSNNSMGRL).

It belongs to the MIT1/WOR1 family.

Its subcellular location is the nucleus. Global transcriptional regulator of pathogenicity. Differentially regulates expression of effector genes. Also required for radial growth and production of asexual conidiospores, and plays a role in mycelium pigmentation. Not required for induction of Ave1, the effector that activates resistance mediated by the Ve1 immune receptor in tomato. This is Global transcription regulator sge1 from Verticillium dahliae (strain VdLs.17 / ATCC MYA-4575 / FGSC 10137) (Verticillium wilt).